Here is a 261-residue protein sequence, read N- to C-terminus: MKLPFLNKNHSTSSYSSNSSSSSWPWPSCNQNPKTLSFRATITFTNPIHDQDDDELDLLDPPEITDSVENVIKGLRSSERLIFESKGETNSILEEATSKREEEDEEEGFMLFSLESDDPYSDFKRSMEEMVEAHALHHDWKSLEKLLLQFLKVNAKTSHRYIFAAFVDLLMNLALDTKKAIINNDISKDDGVSASRAAAAGEASTSCCNSMTLGESPSSPLSFYTSCSSSSSSDETSSMSVRFLPLSSLLEMDEKTKEILV.

The interval 1–28 is disordered; that stretch reads MKLPFLNKNHSTSSYSSNSSSSSWPWPS. A compositionally biased stretch (low complexity) spans 11 to 28; that stretch reads STSSYSSNSSSSSWPWPS. Residues 112–172 form the OVATE domain; it reads FSLESDDPYS…FAAFVDLLMN (61 aa).

Interacts with BLH1 and BLH3. As to expression, expressed in roots, cauline leaves, shoots, flower buds and siliques.

Its subcellular location is the nucleus. In terms of biological role, transcriptional repressor that regulates multiple aspects of plant growth and development through the regulation of BEL1-LIKE (BLH) and KNOX TALE (KNAT) homeodomain transcription factors. The protein is Transcription repressor OFP15 (OFP15) of Arabidopsis thaliana (Mouse-ear cress).